The primary structure comprises 338 residues: Malate dehydrogenase, mitochondrial (338 aa).

The transit peptide at 1 to 24 (MLSALARPASAALRRSFSTSAQNN) directs the protein to the mitochondrion. NAD(+) contacts are provided by residues 31 to 37 (GASGGIG) and Asp57. The O-linked (GlcNAc) serine glycan is linked to Ser33. 2 positions are modified to N6-acetyllysine; alternate: Lys78 and Lys91. An N6-succinyllysine; alternate mark is found at Lys78 and Lys91. Residues Arg104 and Arg110 each coordinate substrate. NAD(+) contacts are provided by residues Asn117 and 140–142 (IAN). Residue Asn142 coordinates substrate. Lys165 bears the N6-acetyllysine mark. Arg176 is a substrate binding site. The residue at position 185 (Lys185) is an N6-acetyllysine; alternate. Lys185 is subject to N6-succinyllysine; alternate. His200 serves as the catalytic Proton acceptor. An N6-succinyllysine modification is found at Lys203. N6-acetyllysine; alternate occurs at positions 215 and 239. N6-succinyllysine; alternate is present on residues Lys215 and Lys239. Residue Lys239 is modified to N6-malonyllysine; alternate. A Phosphoserine modification is found at Ser246. Position 251 (Met251) interacts with NAD(+). At Lys269 the chain carries N6-succinyllysine. Lys296, Lys301, Lys307, Lys314, and Lys324 each carry N6-acetyllysine; alternate. N6-succinyllysine; alternate occurs at positions 296, 301, 307, 314, and 324. The residue at position 307 (Lys307) is an N6-malonyllysine; alternate. The residue at position 326 (Ser326) is a Phosphoserine. 3 positions are modified to N6-acetyllysine; alternate: Lys328, Lys329, and Lys335. At Lys328 the chain carries N6-succinyllysine; alternate. N6-malonyllysine; alternate is present on Lys329. The residue at position 335 (Lys335) is an N6-succinyllysine; alternate.

Belongs to the LDH/MDH superfamily. MDH type 1 family. Homodimer. Acetylation is enhanced by up to 67% after treatment either with trichostin A (TSA) or with nicotinamide (NAM) with the appearance of tri- and tetraacetylations. Glucose also increases acetylation by about 60%.

Its subcellular location is the mitochondrion matrix. The catalysed reaction is (S)-malate + NAD(+) = oxaloacetate + NADH + H(+). With respect to regulation, enzyme activity is enhanced by acetylation. The polypeptide is Malate dehydrogenase, mitochondrial (MDH2) (Homo sapiens (Human)).